The chain runs to 65 residues: Small ribosomal subunit protein eS17 (65 aa).

The protein belongs to the eukaryotic ribosomal protein eS17 family.

The sequence is that of Small ribosomal subunit protein eS17 from Archaeoglobus fulgidus (strain ATCC 49558 / DSM 4304 / JCM 9628 / NBRC 100126 / VC-16).